Consider the following 56-residue polypeptide: Light-harvesting protein B-880 beta chain (56 aa).

Residues 1–22 (AEIDRPVSLSGLTEGEAREFHG) are Cytoplasmic-facing. 2 residues coordinate a bacteriochlorophyll: His21 and His39. A helical membrane pass occupies residues 23-45 (VFMTSFMVFIAVAIVAHILAWMW). Residues 46-56 (RPWIPGPEGYA) are Periplasmic-facing.

The protein belongs to the antenna complex beta subunit family. In terms of assembly, the core complex is formed by different alpha and beta chains, binding bacteriochlorophyll molecules, and arranged most probably in tetrameric structures disposed around the reaction center. The non-pigmented gamma chains may constitute additional components.

It is found in the cell inner membrane. Functionally, antenna complexes are light-harvesting systems, which transfer the excitation energy to the reaction centers. The protein is Light-harvesting protein B-880 beta chain of Afifella marina (Rhodobium marinum).